Consider the following 119-residue polypeptide: uncharacterized protein (119 aa).

The disordered stretch occupies residues 67–119 (LGLKEVQKKSNEGLNEVQGVADINKQKRPANSQDSSSVEGDIQNFLEKVTGKN). Residues 95–104 (PANSQDSSSV) show a composition bias toward polar residues.

This is an uncharacterized protein from Anabaena variabilis.